The chain runs to 220 residues: Splicing factor U2AF 26 kDa subunit (220 aa).

Position 2 is an N-acetylalanine (A2). The C3H1-type 1 zinc finger occupies 12–40 (EKDKVNCSFYFKIGVCRHGDRCSRLHNKP). An RRM domain is found at 65–147 (SHCHVSDVEV…QAVHGELSPV (83 aa)). The segment at 149–176 (DFRESCCRQYEMGECTRGGFCNFMHLRP) adopts a C3H1-type 2 zinc-finger fold. A disordered region spans residues 185-220 (LYGRGPRRRSPPRFHTGHHPRERNHRCSPDHWHGRF). Over residues 189–208 (GPRRRSPPRFHTGHHPRERN) the composition is skewed to basic residues. Over residues 209-220 (HRCSPDHWHGRF) the composition is skewed to basic and acidic residues.

The protein belongs to the splicing factor SR family. As to quaternary structure, interacts with GFI1, U2AF2 and C1QBP. As to expression, isoform 2 is widely expressed. Isoform 3 is highly expressed in heart, brain and lung, lower expressed in thymus and much lower expressed in peripheral blood leukocytes.

The protein resides in the nucleus. The protein localises to the nucleus speckle. Its subcellular location is the cytoplasm. RNA-binding protein that function as a pre-mRNA splicing factor. Plays a critical role in both constitutive and enhancer-dependent splicing by mediating protein-protein interactions and protein-RNA interactions required for accurate 3'-splice site selection. Acts by enhancing the binding of U2AF2 to weak pyrimidine tracts. Also participates in the regulation of alternative pre-mRNA splicing. Activates exon 5 skipping of PTPRC during T-cell activation; an event reversed by GFI1. Binds to RNA at the AG dinucleotide at the 3'-splice site. Shows a preference for AGC or AGA. This Homo sapiens (Human) protein is Splicing factor U2AF 26 kDa subunit (U2AF1L4).